Reading from the N-terminus, the 555-residue chain is E3 ubiquitin-protein ligase NEURL1B (555 aa).

The region spanning 38-194 is the NHR 1 domain; that stretch reads APRFHAQAKG…ITDEVQLLES (157 aa). The residue at position 199 (Thr199) is a Phosphothreonine. Residues 279–433 enclose the NHR 2 domain; it reads DLRFHATRGP…GVAGQLRLLG (155 aa). A disordered region spans residues 436 to 493; the sequence is QSSPATTTPSGSLSGSQDDSDSDMTFSVNQSSSASESSLVTAPSSPLSPPVSPVFSPP. Low complexity predominate over residues 462-480; the sequence is SVNQSSSASESSLVTAPSS. Positions 481 to 493 are enriched in pro residues; the sequence is PLSPPVSPVFSPP. Residues 503–543 form an RING-type zinc finger; it reads CTVCFDGEVDTVIYTCGHMCLCHSCGLRLKRQARACCPICR.

Interacts with JAG1, DLL1 and DLL4. In terms of tissue distribution, highest expression in brain, prostate and small intestine. In the brain the levels are higher in fetal than in adult stage. In the adult brain the highest levels are detected in the olfactory system, cerebellar cortex, optic nerve and the frontal lobe.

It localises to the cytoplasm. It carries out the reaction S-ubiquitinyl-[E2 ubiquitin-conjugating enzyme]-L-cysteine + [acceptor protein]-L-lysine = [E2 ubiquitin-conjugating enzyme]-L-cysteine + N(6)-ubiquitinyl-[acceptor protein]-L-lysine.. Its pathway is protein modification; protein ubiquitination. Functionally, E3 ubiquitin-protein ligase involved in regulation of the Notch pathway through influencing the stability and activity of several Notch ligands. The polypeptide is E3 ubiquitin-protein ligase NEURL1B (NEURL1B) (Homo sapiens (Human)).